Here is a 318-residue protein sequence, read N- to C-terminus: Ribose-phosphate pyrophosphokinase 3 (318 aa).

96–101 (RQDKKD) contributes to the ATP binding site. Asp128, His130, Asp139, and Asp143 together coordinate Mg(2+). Residue His130 participates in ATP binding. The interval 212–227 (NDRVAILVDDMADTCV) is binding of phosphoribosylpyrophosphate.

This sequence belongs to the ribose-phosphate pyrophosphokinase family. In terms of assembly, homodimer. The active form is probably a hexamer composed of 3 homodimers. Mg(2+) serves as cofactor. Testis.

It catalyses the reaction D-ribose 5-phosphate + ATP = 5-phospho-alpha-D-ribose 1-diphosphate + AMP + H(+). It participates in metabolic intermediate biosynthesis; 5-phospho-alpha-D-ribose 1-diphosphate biosynthesis; 5-phospho-alpha-D-ribose 1-diphosphate from D-ribose 5-phosphate (route I): step 1/1. With respect to regulation, activated by magnesium and inorganic phosphate. Its function is as follows. Catalyzes the synthesis of phosphoribosylpyrophosphate (PRPP) that is essential for nucleotide synthesis. The sequence is that of Ribose-phosphate pyrophosphokinase 3 (PRPS1L1) from Homo sapiens (Human).